We begin with the raw amino-acid sequence, 96 residues long: Cysteine proteinase (96 aa).

An intrachain disulfide couples cysteine 25 to cysteine 79. Residues histidine 31 and asparagine 58 contribute to the active site.

This sequence belongs to the peptidase C1 family.

In Carica papaya (Papaya), this protein is Cysteine proteinase.